Reading from the N-terminus, the 464-residue chain is Pup--protein ligase (464 aa).

Position 14 (Glu-14) interacts with Mg(2+). Arg-58 provides a ligand contact to ATP. Tyr-60 provides a ligand contact to Mg(2+). Catalysis depends on Asp-62, which acts as the Proton acceptor. Glu-68 serves as a coordination point for Mg(2+). ATP contacts are provided by Thr-71 and Trp-430.

This sequence belongs to the Pup ligase/Pup deamidase family. Pup-conjugating enzyme subfamily.

The catalysed reaction is ATP + [prokaryotic ubiquitin-like protein]-L-glutamate + [protein]-L-lysine = ADP + phosphate + N(6)-([prokaryotic ubiquitin-like protein]-gamma-L-glutamyl)-[protein]-L-lysine.. It functions in the pathway protein degradation; proteasomal Pup-dependent pathway. Its pathway is protein modification; protein pupylation. In terms of biological role, catalyzes the covalent attachment of the prokaryotic ubiquitin-like protein modifier Pup to the proteasomal substrate proteins, thereby targeting them for proteasomal degradation. This tagging system is termed pupylation. The ligation reaction involves the side-chain carboxylate of the C-terminal glutamate of Pup and the side-chain amino group of a substrate lysine. This is Pup--protein ligase from Micrococcus luteus (strain ATCC 4698 / DSM 20030 / JCM 1464 / CCM 169 / CCUG 5858 / IAM 1056 / NBRC 3333 / NCIMB 9278 / NCTC 2665 / VKM Ac-2230) (Micrococcus lysodeikticus).